Consider the following 423-residue polypeptide: Serine--tRNA ligase (423 aa).

228–230 (TSE) contacts L-serine. 259–261 (RLE) contacts ATP. Residue glutamate 282 coordinates L-serine. Residue 346-349 (EISS) coordinates ATP. Position 384 (serine 384) interacts with L-serine.

This sequence belongs to the class-II aminoacyl-tRNA synthetase family. Type-1 seryl-tRNA synthetase subfamily. Homodimer. The tRNA molecule binds across the dimer.

The protein localises to the cytoplasm. It catalyses the reaction tRNA(Ser) + L-serine + ATP = L-seryl-tRNA(Ser) + AMP + diphosphate + H(+). The enzyme catalyses tRNA(Sec) + L-serine + ATP = L-seryl-tRNA(Sec) + AMP + diphosphate + H(+). It functions in the pathway aminoacyl-tRNA biosynthesis; selenocysteinyl-tRNA(Sec) biosynthesis; L-seryl-tRNA(Sec) from L-serine and tRNA(Sec): step 1/1. In terms of biological role, catalyzes the attachment of serine to tRNA(Ser). Is also able to aminoacylate tRNA(Sec) with serine, to form the misacylated tRNA L-seryl-tRNA(Sec), which will be further converted into selenocysteinyl-tRNA(Sec). The sequence is that of Serine--tRNA ligase from Ehrlichia canis (strain Jake).